We begin with the raw amino-acid sequence, 395 residues long: Probable isocitrate dehydrogenase [NAD] gamma 2, mitochondrial (395 aa).

A mitochondrion-targeting transit peptide spans 1–25 (MLAAGSCSVRTILQPALLLGHSREV). Position 117 (T117) interacts with citrate. R133, R164, and D251 together coordinate substrate. D251 contacts Mn(2+). ADP is bound at residue N321.

It belongs to the isocitrate and isopropylmalate dehydrogenases family. Heterooligomer of subunits alpha (IDH3A), beta (IDH3B), and gamma (IDH3G) in the apparent ratio of 2:1:1. The heterodimer containing one IDH3A and one IDH3B subunit and the heterodimer containing one IDH3A and one IDH3G subunit assemble into a heterotetramer (which contains two subunits of IDH3A, one of IDH3B and one of IDH3G) and further into the heterooctamer. Mg(2+) serves as cofactor. The cofactor is Mn(2+).

Its subcellular location is the mitochondrion. The heterotetramer and the heterodimer composed of IDH3A and IDH3G subunits can be allosterically activated by citrate (CIT) or/and ADP, and the two activators can act independently or synergistically. The heterodimer composed of IDH3A and IDH3B subunits cannot be allosterically regulated and the allosteric regulation of the heterotetramer is through the IDH3G subunit and not the IDH3B subunit. The IDH3G subunit contains the allosteric site which consists of a CIT-binding site and an ADP-binding site, and the binding of CIT and ADP causes conformational changes at the allosteric site which are transmitted to the active site in the catalytic subunit (IDH3A) through a cascade of conformational changes at the heterodimer interface, leading to stabilization of the isocitrate-binding at the active site and thus activation of the enzyme. ATP can activate the heterotetramer and the heterodimer composed of IDH3A and IDH3G subunits at low concentrations but inhibits their activities at high concentrations, whereas ATP exhibits only inhibitory effect on the heterodimer composed of IDH3A and IDH3B subunits. In terms of biological role, regulatory subunit which plays a role in the allosteric regulation of the enzyme catalyzing the decarboxylation of isocitrate (ICT) into alpha-ketoglutarate. The heterodimer composed of the alpha (IDH3A) and beta (IDH3B) subunits and the heterodimer composed of the alpha (IDH3A) and gamma (IDH3G) subunits, have considerable basal activity but the full activity of the heterotetramer (containing two subunits of IDH3A, one of IDH3B and one of IDH3G) requires the assembly and cooperative function of both heterodimers. This chain is Probable isocitrate dehydrogenase [NAD] gamma 2, mitochondrial, found in Rattus norvegicus (Rat).